A 236-amino-acid chain; its full sequence is Small ribosomal subunit protein uS2c (236 aa).

The protein belongs to the universal ribosomal protein uS2 family.

The protein localises to the plastid. The protein resides in the chloroplast. The sequence is that of Small ribosomal subunit protein uS2c (rps2) from Liriodendron tulipifera (Tuliptree).